A 396-amino-acid chain; its full sequence is Methionine import ATP-binding protein MetN 2 (396 aa).

The 240-residue stretch at 41–280 (VSFELVGKVF…PRHGATRALL (240 aa)) folds into the ABC transporter domain. An ATP-binding site is contributed by 77 to 84 (GRSGAGKS).

It belongs to the ABC transporter superfamily. Methionine importer (TC 3.A.1.24) family. As to quaternary structure, the complex is composed of two ATP-binding proteins (MetN), two transmembrane proteins (MetI) and a solute-binding protein (MetQ).

The protein resides in the cell inner membrane. The enzyme catalyses L-methionine(out) + ATP + H2O = L-methionine(in) + ADP + phosphate + H(+). The catalysed reaction is D-methionine(out) + ATP + H2O = D-methionine(in) + ADP + phosphate + H(+). Functionally, part of the ABC transporter complex MetNIQ involved in methionine import. Responsible for energy coupling to the transport system. In Burkholderia mallei (strain ATCC 23344), this protein is Methionine import ATP-binding protein MetN 2.